The chain runs to 566 residues: Alpha-keto-acid decarboxylase (566 aa).

Glu-61 contributes to the thiamine diphosphate binding site. The interval 396–478 (TSFYGMADHR…VVVNNDGYTV (83 aa)) is thiamine pyrophosphate binding. Mg(2+) is bound by residues Asp-446, Asn-473, and Gly-475.

The protein belongs to the TPP enzyme family. It depends on a metal cation as a cofactor. The cofactor is thiamine diphosphate.

In terms of biological role, decarboxylates branched-chain and aromatic alpha-keto acids to aldehydes. This chain is Alpha-keto-acid decarboxylase (kdc), found in Mycobacterium ulcerans (strain Agy99).